Consider the following 429-residue polypeptide: Fc receptor-like protein 1 (429 aa).

A signal peptide spans 1–16 (MLPRLLLLICAPLCEP). Ig-like C2-type domains follow at residues 17–104 (AELF…SQIN), 109–200 (PVAD…VSIT), and 208–291 (PILM…EAVT). Residues 17 to 307 (AELFLIASPS…TGARSNHLTS (291 aa)) lie on the Extracellular side of the membrane. 3 disulfides stabilise this stretch: Cys38–Cys86, Cys134–Cys183, and Cys229–Cys276. Asn293 is a glycosylation site (N-linked (GlcNAc...) asparagine). The chain crosses the membrane as a helical span at residues 308–328 (GVIEGLLSTLGPATVALLFCY). Over 329 to 429 (GLKRKIGRRS…ITDVDYEDAM (101 aa)) the chain is Cytoplasmic. Short sequence motifs (ITIM motif) lie at residues 354–359 (FTYLNS), 367–372 (PIYENV), 379–384 (EVYSLA), 410–415 (DIYSRL), and 423–428 (VDYEDA).

Interacts with ABL1. Interacts with GRB2 and SOS1. Interacts with SHIP-1/INPP5D. In terms of processing, phosphorylated on tyrosines upon activation. Primarily expressed in secondary lymphoid tissues by mature subsets of B-cells. Detected in spleen, lymph node, heart, skeletal muscle, kidney, liver and placenta. Specifically expressed by mature B lineage cells with higher expression in naive versus memory B-cells (at protein level).

The protein resides in the cell membrane. Its function is as follows. Type I transmembrane surface glycoprotein preferentially expressed by B-cells that regulates BCR-mediated signaling responses. Recruits ABL1 as the intracellular effector molecule to enhance B-cell activation. Also plays a negative role by suppressing ERK activation under homeostatic and BCR-stimulated conditions in a GRB2-dependent manner. The sequence is that of Fc receptor-like protein 1 (FCRL1) from Homo sapiens (Human).